The chain runs to 427 residues: G2/mitotic-specific cyclin-3 (427 aa).

Residues 1-12 (MHHNSQSLSSGH) are compositionally biased toward polar residues. Disordered regions lie at residues 1–29 (MHHN…NLKH) and 89–126 (SVAQ…EDQE). A compositionally biased stretch (basic and acidic residues) spans 89-105 (SVAQRKEADHNDLLTDR). Acidic residues predominate over residues 106 to 126 (EQEEPVEDDGESEEDEEEDQE).

Belongs to the cyclin family. Cyclin AB subfamily.

Its function is as follows. Essential for the control of the cell cycle at the G2/M (mitosis) transition. Interacts with the CDC2 protein kinase to form MPF. G2/M cyclins accumulate steadily during G2 and are abruptly destroyed at mitosis. In Saccharomyces cerevisiae (strain ATCC 204508 / S288c) (Baker's yeast), this protein is G2/mitotic-specific cyclin-3 (CLB3).